The following is a 700-amino-acid chain: Elongation factor G 1 (700 aa).

In terms of domain architecture, tr-type G spans glutamate 8–isoleucine 290. Residues alanine 17–threonine 24, aspartate 88–histidine 92, and asparagine 142–aspartate 145 each bind GTP.

This sequence belongs to the TRAFAC class translation factor GTPase superfamily. Classic translation factor GTPase family. EF-G/EF-2 subfamily.

Its subcellular location is the cytoplasm. Its function is as follows. Catalyzes the GTP-dependent ribosomal translocation step during translation elongation. During this step, the ribosome changes from the pre-translocational (PRE) to the post-translocational (POST) state as the newly formed A-site-bound peptidyl-tRNA and P-site-bound deacylated tRNA move to the P and E sites, respectively. Catalyzes the coordinated movement of the two tRNA molecules, the mRNA and conformational changes in the ribosome. In Bordetella avium (strain 197N), this protein is Elongation factor G 1.